Consider the following 135-residue polypeptide: MKNKPDQLKYSKYQKNRNKGFSTKRNYLIHGNYGLKSIENGFLNFKQIESARKMLIHFLGKSSKILIRVFPDKVLTKKPLEVRMGKGKGPIYDWVSVIKPGIILFEVLNFNYLIVKKAFYVASQKLSIKTEICYE.

This sequence belongs to the universal ribosomal protein uL16 family. Part of the 50S ribosomal subunit.

In terms of biological role, binds 23S rRNA and is also seen to make contacts with the A and possibly P site tRNAs. The protein is Large ribosomal subunit protein uL16 (rplP) of Carsonella ruddii (strain PV).